Reading from the N-terminus, the 546-residue chain is NAD(P)H-quinone oxidoreductase chain 4 (546 aa).

Transmembrane regions (helical) follow at residues 24–44 (FPWLSVSILFPIGCAFLIPFF), 56–76 (FALSVALITFLVTVGSYINGF), 108–128 (MPLILLTSFITALAVLAAWPV), 132–152 (PKLFFFLILIMDGGQIAVFAV), 156–176 (LLFFLSWELELLPVYLLLAIW), 188–208 (FIIYTAGSSIFILLAALAMGF), 232–252 (ILCYIGLLIAFGVKLPIVPLH), 263–283 (TAPVHMLLAGILLKMGGYALL), 297–317 (FSPLLIVLGVVNIIYAALTSF), 326–346 (IAYSSISHMGFVLIGIGSFSS), 352–372 (AMLQMVSHGLIGASLFFLVGA), 396–416 (FALWTACSLASLALPGMSGFV), 437–457 (VIMASLAAIGVILTPIYLLSM), and 484–504 (IYIIACLLLPIIGIGLYPRLV).

This sequence belongs to the complex I subunit 4 family.

Its subcellular location is the cellular thylakoid membrane. It carries out the reaction a plastoquinone + NADH + (n+1) H(+)(in) = a plastoquinol + NAD(+) + n H(+)(out). It catalyses the reaction a plastoquinone + NADPH + (n+1) H(+)(in) = a plastoquinol + NADP(+) + n H(+)(out). Its function is as follows. NDH-1 shuttles electrons from NAD(P)H, via FMN and iron-sulfur (Fe-S) centers, to quinones in the respiratory chain. The immediate electron acceptor for the enzyme in this species is believed to be plastoquinone. Couples the redox reaction to proton translocation (for every two electrons transferred, four hydrogen ions are translocated across the cytoplasmic membrane), and thus conserves the redox energy in a proton gradient. The polypeptide is NAD(P)H-quinone oxidoreductase chain 4 (Prochlorococcus marinus subsp. pastoris (strain CCMP1986 / NIES-2087 / MED4)).